A 548-amino-acid chain; its full sequence is Putative ATP-dependent RNA helicase R290 (548 aa).

The Helicase ATP-binding domain maps to 38–206 (INKVINGEDV…CKVLQLKTNE (169 aa)). An ATP-binding site is contributed by 51–58 (LMTSAGKS). Positions 150–153 (DEAH) match the DEAH box motif. Residues 231-376 (DIVPIINKYP…KTQLALLEQM (146 aa)) form the Helicase C-terminal domain.

It belongs to the DEAD box helicase family. DEAH subfamily.

It carries out the reaction ATP + H2O = ADP + phosphate + H(+). This is Putative ATP-dependent RNA helicase R290 from Acanthamoeba polyphaga mimivirus (APMV).